Consider the following 326-residue polypeptide: Negative regulator of the PHO system (326 aa).

In terms of domain architecture, Protein kinase spans 8–290; that stretch reads FQQLEKLGEG…ARQALQHPWF (283 aa). Residues 14-22 and Lys-37 contribute to the ATP site; that span reads LGEGTYATV. Asp-131 (proton acceptor) is an active-site residue. Residues 300–326 are disordered; sequence PQHLSDPYQQQQQQQQHPHQPIIDQQY. Over residues 305-326 the composition is skewed to low complexity; sequence DPYQQQQQQQQHPHQPIIDQQY.

Belongs to the protein kinase superfamily. CMGC Ser/Thr protein kinase family. CDC2/CDKX subfamily. As to quaternary structure, interacts with a number of cyclins.

It carries out the reaction L-seryl-[protein] + ATP = O-phospho-L-seryl-[protein] + ADP + H(+). The enzyme catalyses L-threonyl-[protein] + ATP = O-phospho-L-threonyl-[protein] + ADP + H(+). Its function is as follows. When phosphate concentrations are high it phosphorylates the PHO4 transcription factor thus establishing repression. In Candida albicans (Yeast), this protein is Negative regulator of the PHO system (PHO85).